Here is a 489-residue protein sequence, read N- to C-terminus: Hyaluronoglucuronidase (489 aa).

Catalysis depends on Glu176, which acts as the Proton donor. The active-site Nucleophile is the Glu290.

Belongs to the glycosyl hydrolase 79 family.

It catalyses the reaction Random hydrolysis of (1-&gt;3)-linkages between beta-D-glucuronate and N-acetyl-D-glucosamine residues in hyaluronate.. Hyaluronidase activity is inhibited by Mn(2+), Cu(2+) and Fe(3+). Functionally, hyaluronidase that mediates hydrolysis of (1-&gt;3)-linkages between beta-D-glucuronate and N-acetyl-D-glucosamine residues in hyaluronate. Very specific to hyaluronate: not able to hydrolyze chitin, heparin or chondroitin sulfate. This chain is Hyaluronoglucuronidase, found in Hirudo nipponia (Korean blood-sucking leech).